We begin with the raw amino-acid sequence, 330 residues long: Ketol-acid reductoisomerase (NADP(+)) (330 aa).

A KARI N-terminal Rossmann domain is found at 1-181 (MKVFYDSDFK…GLSRAGVIQT (181 aa)). NADP(+) is bound by residues 24-27 (YGSQ), arginine 47, serine 52, and 82-85 (DELQ). Residue histidine 107 is part of the active site. Glycine 133 provides a ligand contact to NADP(+). The KARI C-terminal knotted domain occupies 182–327 (TFKEETETDL…AKLRKMCGLE (146 aa)). Residues aspartate 190, glutamate 194, glutamate 226, and glutamate 230 each coordinate Mg(2+). Serine 251 contributes to the substrate binding site.

This sequence belongs to the ketol-acid reductoisomerase family. Requires Mg(2+) as cofactor.

The enzyme catalyses (2R)-2,3-dihydroxy-3-methylbutanoate + NADP(+) = (2S)-2-acetolactate + NADPH + H(+). It carries out the reaction (2R,3R)-2,3-dihydroxy-3-methylpentanoate + NADP(+) = (S)-2-ethyl-2-hydroxy-3-oxobutanoate + NADPH + H(+). Its pathway is amino-acid biosynthesis; L-isoleucine biosynthesis; L-isoleucine from 2-oxobutanoate: step 2/4. It functions in the pathway amino-acid biosynthesis; L-valine biosynthesis; L-valine from pyruvate: step 2/4. Its function is as follows. Involved in the biosynthesis of branched-chain amino acids (BCAA). Catalyzes an alkyl-migration followed by a ketol-acid reduction of (S)-2-acetolactate (S2AL) to yield (R)-2,3-dihydroxy-isovalerate. In the isomerase reaction, S2AL is rearranged via a Mg-dependent methyl migration to produce 3-hydroxy-3-methyl-2-ketobutyrate (HMKB). In the reductase reaction, this 2-ketoacid undergoes a metal-dependent reduction by NADPH to yield (R)-2,3-dihydroxy-isovalerate. This is Ketol-acid reductoisomerase (NADP(+)) from Methanococcus maripaludis (strain C6 / ATCC BAA-1332).